The sequence spans 463 residues: L-seryl-tRNA(Sec) selenium transferase (463 aa).

Position 295 is an N6-(pyridoxal phosphate)lysine (K295).

The protein belongs to the SelA family. As to quaternary structure, homodecamer; pentamer of dimers. Binds only one seryl-tRNA(Sec) per dimer. Requires pyridoxal 5'-phosphate as cofactor.

The protein localises to the cytoplasm. The catalysed reaction is L-seryl-tRNA(Sec) + selenophosphate + H(+) = L-selenocysteinyl-tRNA(Sec) + phosphate. The protein operates within aminoacyl-tRNA biosynthesis; selenocysteinyl-tRNA(Sec) biosynthesis; selenocysteinyl-tRNA(Sec) from L-seryl-tRNA(Sec) (bacterial route): step 1/1. Converts seryl-tRNA(Sec) to selenocysteinyl-tRNA(Sec) required for selenoprotein biosynthesis. This Escherichia coli (strain K12 / MC4100 / BW2952) protein is L-seryl-tRNA(Sec) selenium transferase.